A 206-amino-acid polypeptide reads, in one-letter code: Protein MIS12 homolog (206 aa).

Positions 102-206 (DKCQETNPFS…EKESRRLETQ (105 aa)) form a coiled coil.

This sequence belongs to the mis12 family. As to quaternary structure, component of the MIS12 complex composed of MIS12, DSN1, NSL1 and PMF1. Also interacts with KNL1, CBX3, CBX5, NDC80 and ZWINT.

The protein localises to the chromosome. Its subcellular location is the centromere. It is found in the kinetochore. In terms of biological role, part of the MIS12 complex which is required for normal chromosome alignment and segregation and for kinetochore formation during mitosis. Essential for proper kinetochore microtubule attachments. This Mus musculus (Mouse) protein is Protein MIS12 homolog.